A 103-amino-acid polypeptide reads, in one-letter code: Pyrimidine/purine nucleoside phosphorylase (103 aa).

The protein belongs to the nucleoside phosphorylase PpnP family.

It catalyses the reaction a purine D-ribonucleoside + phosphate = a purine nucleobase + alpha-D-ribose 1-phosphate. It carries out the reaction adenosine + phosphate = alpha-D-ribose 1-phosphate + adenine. The catalysed reaction is cytidine + phosphate = cytosine + alpha-D-ribose 1-phosphate. The enzyme catalyses guanosine + phosphate = alpha-D-ribose 1-phosphate + guanine. It catalyses the reaction inosine + phosphate = alpha-D-ribose 1-phosphate + hypoxanthine. It carries out the reaction thymidine + phosphate = 2-deoxy-alpha-D-ribose 1-phosphate + thymine. The catalysed reaction is uridine + phosphate = alpha-D-ribose 1-phosphate + uracil. The enzyme catalyses xanthosine + phosphate = alpha-D-ribose 1-phosphate + xanthine. In terms of biological role, catalyzes the phosphorolysis of diverse nucleosides, yielding D-ribose 1-phosphate and the respective free bases. Can use uridine, adenosine, guanosine, cytidine, thymidine, inosine and xanthosine as substrates. Also catalyzes the reverse reactions. The protein is Pyrimidine/purine nucleoside phosphorylase of Nocardia farcinica (strain IFM 10152).